Consider the following 143-residue polypeptide: Transcription antitermination protein NusB (143 aa).

Belongs to the NusB family.

In terms of biological role, involved in transcription antitermination. Required for transcription of ribosomal RNA (rRNA) genes. Binds specifically to the boxA antiterminator sequence of the ribosomal RNA (rrn) operons. This is Transcription antitermination protein NusB from Streptomyces griseus subsp. griseus (strain JCM 4626 / CBS 651.72 / NBRC 13350 / KCC S-0626 / ISP 5235).